The following is a 118-amino-acid chain: Small ribosomal subunit protein uS11 (118 aa).

The protein belongs to the universal ribosomal protein uS11 family. In terms of assembly, part of the 30S ribosomal subunit. Interacts with proteins S7 and S18. Binds to IF-3.

Located on the platform of the 30S subunit, it bridges several disparate RNA helices of the 16S rRNA. Forms part of the Shine-Dalgarno cleft in the 70S ribosome. The polypeptide is Small ribosomal subunit protein uS11 (Carsonella ruddii (strain PV)).